The sequence spans 284 residues: Pantothenate synthetase (284 aa).

Position 30–37 (30–37 (MGNLHDGH)) interacts with ATP. Catalysis depends on histidine 37, which acts as the Proton donor. Residue glutamine 61 coordinates (R)-pantoate. Glutamine 61 is a beta-alanine binding site. Position 149–152 (149–152 (GEKD)) interacts with ATP. (R)-pantoate is bound at residue glutamine 155. Residues isoleucine 178 and 186-189 (LSSR) contribute to the ATP site.

It belongs to the pantothenate synthetase family. Homodimer.

The protein resides in the cytoplasm. The catalysed reaction is (R)-pantoate + beta-alanine + ATP = (R)-pantothenate + AMP + diphosphate + H(+). Its pathway is cofactor biosynthesis; (R)-pantothenate biosynthesis; (R)-pantothenate from (R)-pantoate and beta-alanine: step 1/1. In terms of biological role, catalyzes the condensation of pantoate with beta-alanine in an ATP-dependent reaction via a pantoyl-adenylate intermediate. In Salmonella typhi, this protein is Pantothenate synthetase.